The primary structure comprises 238 residues: Small ribosomal subunit protein uS2c (238 aa).

The protein belongs to the universal ribosomal protein uS2 family.

The protein resides in the plastid. The protein localises to the chloroplast. This Nuphar advena (Common spatterdock) protein is Small ribosomal subunit protein uS2c (rps2).